We begin with the raw amino-acid sequence, 447 residues long: UDP-glycosyltransferase 76E3 (447 aa).

UDP-alpha-D-glucose-binding positions include Ser269, Ala328–Gln330, His345–Glu353, and Gln367–Gln370.

This sequence belongs to the UDP-glycosyltransferase family.

The sequence is that of UDP-glycosyltransferase 76E3 (UGT76E3) from Arabidopsis thaliana (Mouse-ear cress).